Consider the following 505-residue polypeptide: Maturase K (505 aa).

Belongs to the intron maturase 2 family. MatK subfamily.

Its subcellular location is the plastid. The protein resides in the chloroplast. In terms of biological role, usually encoded in the trnK tRNA gene intron. Probably assists in splicing its own and other chloroplast group II introns. In Idiospermum australiense (Ribbonwood tree), this protein is Maturase K.